The primary structure comprises 399 residues: Elongation factor Tu (399 aa).

In terms of domain architecture, tr-type G spans lysine 10–glutamate 204. Residues glycine 19–threonine 26 form a G1 region. Glycine 19–threonine 26 lines the GTP pocket. Position 26 (threonine 26) interacts with Mg(2+). The segment at glycine 60 to asparagine 64 is G2. Positions aspartate 81 to glycine 84 are G3. GTP-binding positions include aspartate 81–histidine 85 and asparagine 136–aspartate 139. A G4 region spans residues asparagine 136–aspartate 139. Positions serine 174–leucine 176 are G5.

The protein belongs to the TRAFAC class translation factor GTPase superfamily. Classic translation factor GTPase family. EF-Tu/EF-1A subfamily. Monomer.

It localises to the cytoplasm. It carries out the reaction GTP + H2O = GDP + phosphate + H(+). Its function is as follows. GTP hydrolase that promotes the GTP-dependent binding of aminoacyl-tRNA to the A-site of ribosomes during protein biosynthesis. The chain is Elongation factor Tu from Prochlorococcus marinus (strain MIT 9215).